The chain runs to 333 residues: Acyl-CoA wax alcohol acyltransferase 2 (333 aa).

The next 3 helical transmembrane spans lie at valine 15–valine 35, tyrosine 38–phenylalanine 58, and isoleucine 130–leucine 150.

The protein belongs to the diacylglycerol acyltransferase family. In terms of assembly, monomer. Highly expressed in skin, where it is primarily restricted to undifferentiated peripheral sebocytes. Also expressed at lower level in other tissues except pancreas.

Its subcellular location is the endoplasmic reticulum membrane. The enzyme catalyses a long chain fatty alcohol + a fatty acyl-CoA = a wax ester + CoA. It carries out the reaction all-trans-retinol + an acyl-CoA = an all-trans-retinyl ester + CoA. The catalysed reaction is an acyl-CoA + a 1,2-diacyl-sn-glycerol = a triacyl-sn-glycerol + CoA. It catalyses the reaction 11-cis-retinol + a fatty acyl-CoA = 11-cis-retinyl ester + CoA. The enzyme catalyses 9-cis-retinol + a fatty acyl-CoA = 9-cis-retinyl ester + CoA. It carries out the reaction 13-cis-retinol + a fatty acyl-CoA = 13-cis-retinyl ester + CoA. The catalysed reaction is a 1-acylglycerol + an acyl-CoA = a 1,2-diacylglycerol + CoA. It catalyses the reaction 1-O-alkylglycerol + an acyl-CoA = 1-O-alkyl-3-acylglycerol + CoA. The enzyme catalyses a 2-acylglycerol + an acyl-CoA = a 1,2-diacyl-sn-glycerol + CoA. It carries out the reaction 2-(9Z-octadecenoyl)-glycerol + hexadecanoyl-CoA = 1-hexadecanoyl-2-(9Z-octadecenoyl)-sn-glycerol + CoA. The catalysed reaction is 1,2-di-(9Z-octadecenoyl)-sn-glycerol + hexadecanoyl-CoA = 1,2-di-(9Z)-octadecenoyl-3-hexadecanoyl-sn-glycerol + CoA. It catalyses the reaction hexadecan-1-ol + hexadecanoyl-CoA = hexadecanyl hexadecanoate + CoA. The enzyme catalyses hexadecane-1,2-diol + hexadecanoyl-CoA = 2-hydroxyhexadecyl hexadecanoate + CoA. It carries out the reaction 9-cis-retinol + hexadecanoyl-CoA = 9-cis-retinyl hexadecanoate + CoA. The catalysed reaction is all-trans-retinol + hexadecanoyl-CoA = all-trans-retinyl hexadecanoate + CoA. It catalyses the reaction 1,2-di-(9Z-octadecenoyl)-sn-glycerol + (9Z)-octadecenoyl-CoA = 1,2,3-tri-(9Z-octadecenoyl)-glycerol + CoA. The enzyme catalyses hexadecan-1-ol + (9Z)-octadecenoyl-CoA = hexadecanyl (9Z)-octadecenoate + CoA. It carries out the reaction (9Z)-hexadecen-1-ol + (9Z)-octadecenoyl-CoA = 1-O-(9Z)-hexadecenyl (9Z)-octadecenoate + CoA. The catalysed reaction is octadecan-1-ol + (9Z)-octadecenoyl-CoA = 1-O-octadecyl (9Z)-octadecenoate + CoA. It catalyses the reaction (9Z)-octadecen-1-ol + (9Z)-octadecenoyl-CoA = 1-O-(9Z)-octadecenyl (9Z)-octadecenoate + CoA. The enzyme catalyses hexadecan-1-ol + (9Z)-hexadecenoyl-CoA = 1-O-hexadecyl (9Z)-hexadecenoate + CoA. It carries out the reaction hexadecan-1-ol + octadecanoyl-CoA = hexadecanyl octadecanoate + CoA. The catalysed reaction is 11-cis-retinol + hexadecanoyl-CoA = 11-cis-retinyl hexadecanoate + CoA. It catalyses the reaction 1-O-(9Z-octadecenyl)-glycerol + (9Z)-octadecenoyl-CoA = 1-O-(9Z-octadecyl)-3-(9Z-octadecenoyl)-glycerol + CoA. The enzyme catalyses 1-(9Z-octadecenoyl)-glycerol + (9Z)-octadecenoyl-CoA = 1,2-di-(9Z-octadecenoyl)-glycerol + CoA. It carries out the reaction 11-cis-retinol + tetradecanoyl-CoA = 11-cis-retinyl tetradecanoate + CoA. The catalysed reaction is 9-cis-retinol + tetradecanoyl-CoA = 9-cis-retinyl tetradecanoate + CoA. It catalyses the reaction 13-cis-retinol + tetradecanoyl-CoA = 13-cis-retinyl tetradecanoate + CoA. The enzyme catalyses all-trans-retinol + tetradecanoyl-CoA = all-trans-retinyl tetradecanoate + CoA. It carries out the reaction tetradecan-1-ol + tetradecanoyl-CoA = tetradecanyl tetradecanoate + CoA. With respect to regulation, 11-cis retinoids act as allosteric modulators of acyl-CoA retinol O-fatty-acyltransferase (ARAT) activity by suppressing esterification of 9-cis, 13-cis, or all-trans retinols concurrently increasing the enzyme specificity toward 11-cis isomer. Its function is as follows. Acyltransferase that catalyzes the formation of ester bonds between fatty alcohols and fatty acyl-CoAs to form wax monoesters. Shows a preference for medium chain acyl-CoAs from C12 to C16 in length and fatty alcohols shorter than C20, as the acyl donors and acceptors, respectively. Also possesses acyl-CoA retinol acyltransferase (ARAT) activity that preferentially esterifies 11-cis-retinol, a chromophore precursor of bleached opsin pigments in cone cells. Shows higher catalytic efficiency toward 11-cis-retinol versus 9-cis-retinol, 13-cis-retinol, and all-trans-retinol substrates. The polypeptide is Acyl-CoA wax alcohol acyltransferase 2 (AWAT2) (Homo sapiens (Human)).